Consider the following 38-residue polypeptide: Cytochrome b6-f complex subunit 5 (38 aa).

The helical transmembrane segment at 5 to 25 (LLLGIVLGLIPVTLAGLFVAA) threads the bilayer.

Belongs to the PetG family. The 4 large subunits of the cytochrome b6-f complex are cytochrome b6, subunit IV (17 kDa polypeptide, PetD), cytochrome f and the Rieske protein, while the 4 small subunits are PetG, PetL, PetM and PetN. The complex functions as a dimer.

The protein resides in the cellular thylakoid membrane. In terms of biological role, component of the cytochrome b6-f complex, which mediates electron transfer between photosystem II (PSII) and photosystem I (PSI), cyclic electron flow around PSI, and state transitions. PetG is required for either the stability or assembly of the cytochrome b6-f complex. The sequence is that of Cytochrome b6-f complex subunit 5 from Synechocystis sp. (strain ATCC 27184 / PCC 6803 / Kazusa).